The following is a 152-amino-acid chain: Transcriptional regulator MraZ (152 aa).

2 consecutive SpoVT-AbrB domains span residues 5-52 (ANAI…PLNE) and 81-124 (ATES…DEDM).

The protein belongs to the MraZ family. Forms oligomers.

It is found in the cytoplasm. The protein resides in the nucleoid. This is Transcriptional regulator MraZ from Psychromonas ingrahamii (strain DSM 17664 / CCUG 51855 / 37).